Here is a 779-residue protein sequence, read N- to C-terminus: Transcriptional regulator QRICH1 (779 aa).

M1 carries the post-translational modification N-acetylmethionine. The CARD domain occupies 6-48 (ENTISFEEYIRVKARSVPQHRMKEFLDSLASKGPEALQEFQQT). Disordered regions lie at residues 141-163 (QGQA…PSPS) and 219-242 (ALSP…TASV). S346 is subject to Phosphoserine. Glycyl lysine isopeptide (Lys-Gly) (interchain with G-Cter in SUMO2) cross-links involve residues K354 and K359. Residues 420–430 (QQQPQQQTPQE) show a composition bias toward low complexity. Residues 420 to 443 (QQQPQQQTPQEQTPPPPQQQQQQQ) are disordered. Position 467 is a phosphoserine (S467).

The protein localises to the nucleus. Its subcellular location is the cytoplasm. It is found in the cell membrane. Its function is as follows. Transcriptional regulator that acts as a mediator of the integrated stress response (ISR) through transcriptional control of protein homeostasis under conditions of ER stress. Controls the outcome of the unfolded protein response (UPR), an ER-stress response pathway that either promotes recovery of ER homeostasis and cell survival, or triggers the terminal UPR which elicits programmed cell death when ER stress is prolonged and unresolved. ER stress induces QRICH1 translation by a ribosome translation re-initiation mechanism in response to EIF2S1/eIF-2-alpha phosphorylation, and stress-induced QRICH1 regulates a transcriptional program associated with protein translation, protein secretion-mediated proteotoxicity and cell death during the terminal UPR. May cooperate with ATF4 transcription factor signaling to regulate ER homeostasis which is critical for cell viability. Up-regulates CASP3/caspase-3 activity in epithelial cells under ER stress. Central regulator of proteotoxicity associated with ER stress-mediated inflammatory diseases in the intestines and liver. Involved in chondrocyte hypertrophy, a process required for normal longitudinal bone growth. The chain is Transcriptional regulator QRICH1 (QRICH1) from Bos taurus (Bovine).